Here is a 70-residue protein sequence, read N- to C-terminus: Protein SlyX homolog (70 aa).

The protein belongs to the SlyX family.

The protein is Protein SlyX homolog of Shewanella denitrificans (strain OS217 / ATCC BAA-1090 / DSM 15013).